A 197-amino-acid polypeptide reads, in one-letter code: ATP-dependent Clp protease proteolytic subunit (197 aa).

The active-site Nucleophile is S98. H123 is a catalytic residue.

The protein belongs to the peptidase S14 family. As to quaternary structure, fourteen ClpP subunits assemble into 2 heptameric rings which stack back to back to give a disk-like structure with a central cavity, resembling the structure of eukaryotic proteasomes.

Its subcellular location is the cytoplasm. The enzyme catalyses Hydrolysis of proteins to small peptides in the presence of ATP and magnesium. alpha-casein is the usual test substrate. In the absence of ATP, only oligopeptides shorter than five residues are hydrolyzed (such as succinyl-Leu-Tyr-|-NHMec, and Leu-Tyr-Leu-|-Tyr-Trp, in which cleavage of the -Tyr-|-Leu- and -Tyr-|-Trp bonds also occurs).. In terms of biological role, cleaves peptides in various proteins in a process that requires ATP hydrolysis. Has a chymotrypsin-like activity. Plays a major role in the degradation of misfolded proteins. This chain is ATP-dependent Clp protease proteolytic subunit, found in Enterococcus faecalis (strain ATCC 700802 / V583).